A 201-amino-acid polypeptide reads, in one-letter code: Recombination protein RecR (201 aa).

A C4-type zinc finger spans residues 57–72 (CTHCRTFTEEESCAIC). The region spanning 81–176 (GFLCVVEQPS…KVSRIAHGIP (96 aa)) is the Toprim domain.

The protein belongs to the RecR family.

In terms of biological role, may play a role in DNA repair. It seems to be involved in an RecBC-independent recombinational process of DNA repair. It may act with RecF and RecO. In Histophilus somni (strain 129Pt) (Haemophilus somnus), this protein is Recombination protein RecR.